A 327-amino-acid chain; its full sequence is COP9 signalosome complex subunit 7 (327 aa).

The PCI domain maps to 4–165 (VHHRALDALQ…NPPTVNVTSV (162 aa)). Disordered regions lie at residues 233 to 260 (GGEQLQGGNPGQGQGQGQGGLGKNAGWK) and 276 to 327 (GGSN…GKKS). The segment covering 236-255 (QLQGGNPGQGQGQGQGGLGK) has biased composition (gly residues). The segment covering 315–327 (GARHSKRFLGKKS) has biased composition (basic residues).

It belongs to the CSN7/EIF3M family. CSN7 subfamily. Component of the COP9 signalosome (CSN) complex. As to expression, present in uninduced vegetative hyphae, induced conidiating cultures and in both conidiospores and ascospores.

Its subcellular location is the cytoplasm. It localises to the nucleus. Component of the COP9 signalosome (CSN) complex that acts as an regulator of the ubiquitin (Ubl) conjugation pathway by mediating the deneddylation of the cullin subunit of SCF-type E3 ubiquitin-protein ligase complexes. The CSN complex seems to link protein degradation to sexual development. May be required for sporulation only at elevated temperatures. The sequence is that of COP9 signalosome complex subunit 7 (csnG) from Emericella nidulans (strain FGSC A4 / ATCC 38163 / CBS 112.46 / NRRL 194 / M139) (Aspergillus nidulans).